A 273-amino-acid chain; its full sequence is Dermonecrotic toxin LarSicTox-alphaIB1b (273 aa).

Histidine 5 is an active-site residue. Residues glutamate 25 and aspartate 27 each coordinate Mg(2+). The active-site Nucleophile is histidine 41. Cystine bridges form between cysteine 45/cysteine 51 and cysteine 47/cysteine 190. Mg(2+) is bound at residue aspartate 85. N-linked (GlcNAc...) asparagine glycosylation occurs at asparagine 250.

This sequence belongs to the arthropod phospholipase D family. Class II subfamily. The cofactor is Mg(2+). Expressed by the venom gland.

The protein resides in the secreted. It carries out the reaction an N-(acyl)-sphingosylphosphocholine = an N-(acyl)-sphingosyl-1,3-cyclic phosphate + choline. The catalysed reaction is an N-(acyl)-sphingosylphosphoethanolamine = an N-(acyl)-sphingosyl-1,3-cyclic phosphate + ethanolamine. It catalyses the reaction a 1-acyl-sn-glycero-3-phosphocholine = a 1-acyl-sn-glycero-2,3-cyclic phosphate + choline. The enzyme catalyses a 1-acyl-sn-glycero-3-phosphoethanolamine = a 1-acyl-sn-glycero-2,3-cyclic phosphate + ethanolamine. Its function is as follows. Dermonecrotic toxins cleave the phosphodiester linkage between the phosphate and headgroup of certain phospholipids (sphingolipid and lysolipid substrates), forming an alcohol (often choline) and a cyclic phosphate. This toxin acts on sphingomyelin (SM). It may also act on ceramide phosphoethanolamine (CPE), lysophosphatidylcholine (LPC) and lysophosphatidylethanolamine (LPE), but not on lysophosphatidylserine (LPS), and lysophosphatidylglycerol (LPG). It acts by transphosphatidylation, releasing exclusively cyclic phosphate products as second products. Induces dermonecrosis, hemolysis, increased vascular permeability, edema, inflammatory response, and platelet aggregation. In Loxosceles arizonica (Arizona brown spider), this protein is Dermonecrotic toxin LarSicTox-alphaIB1b.